Consider the following 252-residue polypeptide: 5'-nucleotidase SurE (252 aa).

4 residues coordinate a divalent metal cation: D8, D9, S39, and N96.

It belongs to the SurE nucleotidase family. A divalent metal cation is required as a cofactor.

It localises to the cytoplasm. The catalysed reaction is a ribonucleoside 5'-phosphate + H2O = a ribonucleoside + phosphate. Functionally, nucleotidase that shows phosphatase activity on nucleoside 5'-monophosphates. This is 5'-nucleotidase SurE from Petrotoga mobilis (strain DSM 10674 / SJ95).